The primary structure comprises 319 residues: MamJ paralog LimJ (319 aa).

2 disordered regions span residues 1–59 (MMME…PAPV) and 145–176 (AAAPEPEPEPVPEPEPEPEPEAAHDHAATETE). The span at 30–52 (AALAPAADAEIPASSAPEPAAPI) shows a compositional bias: low complexity. Acidic residues predominate over residues 150–164 (PEPEPVPEPEPEPEP).

It belongs to the magnetosome MamJ protein family.

It is found in the magnetosome. Its function is as follows. Regulates the dynamic behavior of MamK filaments; paralog MamJ also promotes MamK turnover. At least one other protein besides MamJ and LimJ is required for MamK turnover. Might connect magnetosomes to MamK filaments. The protein is MamJ paralog LimJ of Paramagnetospirillum magneticum (strain ATCC 700264 / AMB-1) (Magnetospirillum magneticum).